We begin with the raw amino-acid sequence, 309 residues long: Malate dehydrogenase (309 aa).

NAD(+)-binding positions include 8 to 13 (GAGLVG) and Asp-33. Arg-82 and Arg-88 together coordinate substrate. Residues Asn-95 and 118–120 (VSN) contribute to the NAD(+) site. Residues Asn-120 and Arg-151 each coordinate substrate. His-175 functions as the Proton acceptor in the catalytic mechanism.

The protein belongs to the LDH/MDH superfamily. MDH type 3 family.

It carries out the reaction (S)-malate + NAD(+) = oxaloacetate + NADH + H(+). Its function is as follows. Catalyzes the reversible oxidation of malate to oxaloacetate. The polypeptide is Malate dehydrogenase (Pseudomonas putida (strain GB-1)).